A 129-amino-acid polypeptide reads, in one-letter code: Succinate dehydrogenase cytochrome b556 subunit (129 aa).

Residues 1–26 (MIRNVKKQRPVNLDLQTIRFPITAIA) are Cytoplasmic-facing. The chain crosses the membrane as a helical span at residues 27-52 (SILHRVSGVITFVAVGILLWLLGTSL). Residues 53–68 (SSPEGFEQASAIMGSF) lie on the Periplasmic side of the membrane. Residues 69–89 (FVKFIMWGILTALAYHVVVGI) traverse the membrane as a helical segment. His84 serves as a coordination point for heme. Over 90–108 (RHMMMDFGYLEETFEAGKR) the chain is Cytoplasmic. A helical membrane pass occupies residues 109–129 (SAKISFVITVVLSLLAGVLVW).

This sequence belongs to the cytochrome b560 family. In terms of assembly, part of an enzyme complex containing four subunits: a flavoprotein, an iron-sulfur protein, plus two membrane-anchoring proteins, SdhC and SdhD. The complex can form homotrimers. Requires heme as cofactor.

The protein localises to the cell inner membrane. It functions in the pathway carbohydrate metabolism; tricarboxylic acid cycle. Membrane-anchoring subunit of succinate dehydrogenase (SDH). In Escherichia coli O157:H7, this protein is Succinate dehydrogenase cytochrome b556 subunit (sdhC).